Consider the following 658-residue polypeptide: Probable rhamnogalacturonate lyase B (658 aa).

The first 19 residues, 1–19 (MRFAIPLGAACAWAGVALA), serve as a signal peptide directing secretion. N-linked (GlcNAc...) asparagine glycans are attached at residues N110, N143, N239, N280, N522, N530, N564, N571, N592, and N633.

This sequence belongs to the polysaccharide lyase 4 family.

The protein resides in the secreted. It carries out the reaction Endotype eliminative cleavage of L-alpha-rhamnopyranosyl-(1-&gt;4)-alpha-D-galactopyranosyluronic acid bonds of rhamnogalacturonan I domains in ramified hairy regions of pectin leaving L-rhamnopyranose at the reducing end and 4-deoxy-4,5-unsaturated D-galactopyranosyluronic acid at the non-reducing end.. Its function is as follows. Pectinolytic enzymes consist of four classes of enzymes: pectin lyase, polygalacturonase, pectin methylesterase and rhamnogalacturonase. Degrades the rhamnogalacturonan I (RG-I) backbone of pectin. This is Probable rhamnogalacturonate lyase B (rglB) from Neosartorya fischeri (strain ATCC 1020 / DSM 3700 / CBS 544.65 / FGSC A1164 / JCM 1740 / NRRL 181 / WB 181) (Aspergillus fischerianus).